A 185-amino-acid chain; its full sequence is Threonylcarbamoyl-AMP synthase (185 aa).

The YrdC-like domain occupies 4–185; it reads SFRAQCAARV…LVTGQVIRPA (182 aa).

Belongs to the SUA5 family. TsaC subfamily.

The protein resides in the cytoplasm. The catalysed reaction is L-threonine + hydrogencarbonate + ATP = L-threonylcarbamoyladenylate + diphosphate + H2O. In terms of biological role, required for the formation of a threonylcarbamoyl group on adenosine at position 37 (t(6)A37) in tRNAs that read codons beginning with adenine. Catalyzes the conversion of L-threonine, HCO(3)(-)/CO(2) and ATP to give threonylcarbamoyl-AMP (TC-AMP) as the acyladenylate intermediate, with the release of diphosphate. The sequence is that of Threonylcarbamoyl-AMP synthase from Pseudomonas paraeruginosa (strain DSM 24068 / PA7) (Pseudomonas aeruginosa (strain PA7)).